We begin with the raw amino-acid sequence, 396 residues long: Gap junction gamma-1 protein (396 aa).

The Cytoplasmic portion of the chain corresponds to 1–18 (MSWSFLTRLLEEIHNHST). The helical transmembrane segment at 19–39 (FVGKIWLTVLIVFRIVLTAVG) threads the bilayer. Topologically, residues 40–75 (GESIYYDEQSKFVCNTEQPGCENVCYDAFAPLSHVR) are extracellular. Residues 76-96 (FWVFQIILVATPSVMYLGYAI) traverse the membrane as a helical segment. Residues 97-175 (HKIAKMEHGE…RRIREDGLMK (79 aa)) lie on the Cytoplasmic side of the membrane. The tract at residues 145–165 (ELESEKENKEQSQPKPKHDGR) is disordered. Basic and acidic residues predominate over residues 147–156 (ESEKENKEQS). Residues 176 to 198 (IYVLQLLARTVFEVGFLIGQYFL) traverse the membrane as a helical segment. The Extracellular portion of the chain corresponds to 199-229 (YGFQVHPFYVCSRLPCPHKIDCFISRPTEKT). Residues 230 to 250 (IFLLIMYGVTGLCLLLNIWEM) traverse the membrane as a helical segment. At 251–396 (LHLGFGTIRD…SGDGKTSVWI (146 aa)) the chain is on the cytoplasmic side. Residues 303–358 (ELSNAKIAYKQNKANIAQEQQYGSHEEHLPADLETLQREIRMAQERLDLAIQAYHH) adopt a coiled-coil conformation. The tract at residues 357-396 (HHQNNPHGPREKKAKVGSKSGSNKSSISSKSGDGKTSVWI) is disordered. Residues 373 to 396 (GSKSGSNKSSISSKSGDGKTSVWI) show a composition bias toward low complexity.

Belongs to the connexin family. Gamma-type subfamily. A connexon is composed of a hexamer of connexins. Interacts with CNST.

It is found in the cell membrane. The protein localises to the cell junction. It localises to the gap junction. Functionally, one gap junction consists of a cluster of closely packed pairs of transmembrane channels, the connexons, through which materials of low MW diffuse from one cell to a neighboring cell. This is Gap junction gamma-1 protein (GJC1) from Cricetulus griseus (Chinese hamster).